The primary structure comprises 62 residues: Large ribosomal subunit protein eL37 (62 aa).

Residues C20, C23, C35, and C38 each contribute to the Zn(2+) site. Residues 20 to 38 form a C4-type zinc finger; sequence CRRCGRVSYNVKKGYCAAC.

Belongs to the eukaryotic ribosomal protein eL37 family. Part of the 50S ribosomal subunit. The cofactor is Zn(2+).

Binds to the 23S rRNA. This is Large ribosomal subunit protein eL37 from Pyrococcus furiosus (strain ATCC 43587 / DSM 3638 / JCM 8422 / Vc1).